The sequence spans 224 residues: Ornithine decarboxylase antizyme (224 aa).

Belongs to the ODC antizyme family. As to quaternary structure, interacts with ODC and thereby sterically blocks ODC homodimerization.

Functionally, ornithine decarboxylase (ODC) antizyme protein that negatively regulates ODC activity and intracellular polyamine biosynthesis in response to increased intracellular polyamine levels. Binds to ODC monomers, inhibiting the assembly of the functional ODC homodimer, and targets the monomers for ubiquitin-independent proteolytic destruction by the 26S proteasome. The sequence is that of Ornithine decarboxylase antizyme (spa1) from Schizosaccharomyces octosporus (Fission yeast).